Here is a 603-residue protein sequence, read N- to C-terminus: Probable L-gulonolactone oxidase 6 (603 aa).

The first 35 residues, 1–35 (MAFTSSPSYGSLNAAFWRTIFVVHCISTLVFTTIS), serve as a signal peptide directing secretion. Residues 64-246 (STCRAANVAY…SQVTLKLQPM (183 aa)) enclose the FAD-binding PCMH-type domain.

Belongs to the oxygen-dependent FAD-linked oxidoreductase family. It depends on FAD as a cofactor.

It catalyses the reaction L-gulono-1,4-lactone + O2 = L-ascorbate + H2O2 + H(+). It functions in the pathway cofactor biosynthesis; L-ascorbate biosynthesis. In terms of biological role, may be involved in the biosynthesis of ascorbic acid. The polypeptide is Probable L-gulonolactone oxidase 6 (Arabidopsis thaliana (Mouse-ear cress)).